A 215-amino-acid chain; its full sequence is Probable cutinase 3 (215 aa).

A signal peptide spans 1 to 17 (MHFRALLVSALATLAMA). Cystine bridges form between cysteine 39–cysteine 118 and cysteine 65–cysteine 79. Serine 129 serves as the catalytic Nucleophile. The cysteines at positions 180 and 187 are disulfide-linked. The active site involves aspartate 184. Histidine 197 acts as the Proton donor/acceptor in catalysis.

This sequence belongs to the cutinase family.

The protein resides in the secreted. It carries out the reaction cutin + H2O = cutin monomers.. In terms of biological role, catalyzes the hydrolysis of complex carboxylic polyesters found in the cell wall of plants. Degrades cutin, a macromolecule that forms the structure of the plant cuticle. The sequence is that of Probable cutinase 3 from Aspergillus clavatus (strain ATCC 1007 / CBS 513.65 / DSM 816 / NCTC 3887 / NRRL 1 / QM 1276 / 107).